Consider the following 317-residue polypeptide: AT-hook motif nuclear-localized protein 22 (317 aa).

Disordered regions lie at residues 22-41 (HHQF…HDID) and 48-106 (LKRD…KPPI). Residues 26–35 (QHQQQQQQQN) show a composition bias toward low complexity. Over residues 48-64 (LKRDRDADIDPNEHSSA) the composition is skewed to basic and acidic residues. Positions 72-84 (GSGGESGGGGGGD) are enriched in gly residues. The segment at residues 89–101 (RRPRGRPAGSKNK) is a DNA-binding region (a.T hook). Residues 113-253 (ANALKSHVME…EDDQEEQTAG (141 aa)) enclose the PPC domain. Residues 258-285 (NIDGNATMGGGTQTQTQTQQQQQQQLMQ) are disordered. Residues 270-282 (QTQTQTQQQQQQQ) show a composition bias toward low complexity.

As to quaternary structure, homodimer. Interacts with HDA1/HDA19, HDA6 and HDA9. In terms of tissue distribution, expressed at the hypocotyl-root transition zone and the root hair zone. Also detected in the inflorescence.

It localises to the nucleus. Its function is as follows. Transcription factor that specifically binds AT-rich DNA sequences related to the nuclear matrix attachment regions (MARs). Binds an AT-rich DNA sequences in the FLOWERING LOCUS T (FT) promoter. Acts redundantly with AHL18, AHL27 and AHL29 in the regulation of flowering and regulation of the hypocotyl elongation. Plays a role in both photo- and skotomorphogenesis. Acts as a chromatin remodeling factor that modifies the architecture of FLOWERING LOCUS T (FT) chromatin by modulating both H3 acetylation and methylation leading to the regulation of FT expression during flowering induction. In Arabidopsis thaliana (Mouse-ear cress), this protein is AT-hook motif nuclear-localized protein 22.